Consider the following 269-residue polypeptide: Basic leucine zipper 19 (269 aa).

Residues 140 to 196 (DPKRVKRILANRQSAQRSRVRKLQYISELERSVTTLQMEVSALSPRVAFLDHQRSLL) form the bZIP domain. The basic motif stretch occupies residues 142-161 (KRVKRILANRQSAQRSRVRK). Positions 168-196 (LERSVTTLQMEVSALSPRVAFLDHQRSLL) are leucine-zipper.

In terms of tissue distribution, expressed in roots and shoots.

Its subcellular location is the nucleus. Transcription regulator. In Oryza sativa subsp. japonica (Rice), this protein is Basic leucine zipper 19 (BZIP19).